The following is an 813-amino-acid chain: Tax1-binding protein 1 homolog (813 aa).

A phosphoserine mark is found at Ser124, Ser138, and Ser225. Positions 144–596 (TTKAGLLELK…SYSLQLAEKD (453 aa)) form a coiled coil. The oligomerization stretch occupies residues 320-420 (EEIGKLQSCL…ELQLHAVKTD (101 aa)). A Phosphoserine; by IKKA modification is found at Ser618. Ser631 carries the post-translational modification Phosphoserine. Residues 667 to 732 (AHETRDGADG…NVPIPPDPAN (66 aa)) are disordered. Phosphoserine; by IKKA is present on Ser692. 2 UBZ1-type zinc fingers span residues 751–777 (HKKC…VESH) and 778–804 (WKVC…VQTH). The Zn(2+) site is built by Cys754, Cys757, His773, His777, Cys781, Cys784, His800, and His804.

As to quaternary structure, homooligomer. Interacts with TNFAIP3. Interacts with STARD13. Interacts with MYO6. Interacts with TOM1; the interaction is indirect and is mediated by MYO6, which acts as a bridge between TOM1 and TAX1BP1. Interacts with MAVS; this interaction induces MAVS polyubiquitination. Interacts with TNIP1. Interacts with TRAF6; this interaction mediates deubiquitination of TRAF6 and inhibition of NF-kappa-B activation. Interacts with RIPK1; this interaction negatively regulates RIPK1 ubiquitination. Interacts with NBR1. Interacts with TBK1. Interacts with RB1CC1. Interacts with SQSTM1. Interacts with AZI2. Interacts with TICAM1 and TRIM32; these interactions target TICAM1 to TAX1BP1-mediated selective autophagic degradation. Post-translationally, phosphorylated in the C-terminal region by CHUK/IKKA leading to NF-kappa-B signaling down-regulation.

Its subcellular location is the cytoplasm. It localises to the mitochondrion. It is found in the preautophagosomal structure. The protein resides in the cytoplasmic vesicle. The protein localises to the autophagosome. In terms of biological role, ubiquitin-binding adapter that participates in inflammatory, antiviral and innate immune processes as well as selective autophagy regulation. Plays a key role in the negative regulation of NF-kappa-B and IRF3 signalings by acting as an adapter for the ubiquitin-editing enzyme A20/TNFAIP3 to bind and inactivate its substrates. Disrupts the interactions between the E3 ubiquitin ligase TRAF3 and TBK1/IKBKE to attenuate 'Lys63'-linked polyubiquitination of TBK1 and thereby IFN-beta production. Also recruits A20/TNFAIP3 to ubiquitinated signaling proteins TRAF6 and RIPK1, leading to their deubiquitination and disruption of IL-1 and TNF-induced NF-kappa-B signaling pathways. Inhibits virus-induced apoptosis by inducing the 'Lys-48'-linked polyubiquitination and degradation of MAVS via recruitment of the E3 ligase ITCH, thereby attenuating MAVS-mediated apoptosis signaling. As a macroautophagy/autophagy receptor, facilitates the xenophagic clearance of pathogenic bacteria such as Salmonella typhimurium and Mycobacterium tuberculosis. Upon NBR1 recruitment to the SQSTM1-ubiquitin condensates, acts as the major recruiter of RB1CC1 to these ubiquitin condensates to promote their autophagic degradation. Mediates the autophagic degradation of other substrates including TICAM1. The sequence is that of Tax1-binding protein 1 homolog (Tax1bp1) from Rattus norvegicus (Rat).